Consider the following 145-residue polypeptide: uncharacterized protein (145 aa).

The chain crosses the membrane as a helical span at residues 16 to 36 (VLAYLLQLSASLVLPVAIWLI).

It is found in the mitochondrion membrane. This is an uncharacterized protein from Arabidopsis thaliana (Mouse-ear cress).